Here is a 372-residue protein sequence, read N- to C-terminus: UDP-N-acetylglucosamine 2-epimerase (372 aa).

Substrate is bound by residues Arg10, Lys15, Asp95, Glu117, His212, Gln270, Phe275, 289 to 291 (SGG), Glu295, and Arg312.

The protein belongs to the UDP-N-acetylglucosamine 2-epimerase family.

The catalysed reaction is UDP-N-acetyl-alpha-D-glucosamine = UDP-N-acetyl-alpha-D-mannosamine. The protein operates within capsule biogenesis; capsule polysaccharide biosynthesis. Its activity is regulated as follows. Activated by UDP-GlcNAc and inhibited by 2-acetamidoglucal and UDP. Activity is strongly decreased in the presence of Co(2+) and abolished in the presence of Mn(2+) or Zn(2+). In terms of biological role, catalyzes the interconversion between UDP-N-acetylglucosamine (UDP-GlcNAc) and UDP-N-acetylmannosamine (UDP-ManNAc). Involved in the biosynthesis of the capsular polysaccharides. In vitro, can also use several chemoenzymatically synthesized UDP-ManNAc derivatives as substrates, with lower efficiency. The polypeptide is UDP-N-acetylglucosamine 2-epimerase (Neisseria meningitidis serogroup A / serotype 4A (strain DSM 15465 / Z2491)).